A 319-amino-acid polypeptide reads, in one-letter code: Dehydrogenase/reductase SDR family member 9 (319 aa).

The first 20 residues, 1-20 (MLFWLLALLFLCAFLWNYKG), serve as a signal peptide directing secretion. Residues 34 to 58 (ITGC…RVIA) and Asp83 each bind NAD(+). Ser164 is a binding site for substrate. The Proton acceptor role is filled by Tyr176. Residue Lys180 coordinates NAD(+).

The protein belongs to the short-chain dehydrogenases/reductases (SDR) family. Homotetramer.

The protein localises to the microsome membrane. The protein resides in the endoplasmic reticulum membrane. It carries out the reaction 3beta-hydroxy-5alpha-pregnane-20-one + NAD(+) = 5alpha-pregnane-3,20-dione + NADH + H(+). It catalyses the reaction 17beta-hydroxy-5alpha-androstan-3-one + NAD(+) = 5alpha-androstan-3,17-dione + NADH + H(+). The catalysed reaction is androsterone + NAD(+) = 5alpha-androstan-3,17-dione + NADH + H(+). The enzyme catalyses 5alpha-androstane-3alpha,17beta-diol + NAD(+) = 17beta-hydroxy-5alpha-androstan-3-one + NADH + H(+). It carries out the reaction all-trans-retinol + NAD(+) = all-trans-retinal + NADH + H(+). It catalyses the reaction 3alpha-hydroxy-5alpha-pregnan-20-one + NAD(+) = 5alpha-pregnane-3,20-dione + NADH + H(+). 3-alpha-hydroxysteroid dehydrogenase that converts 3-alpha-tetrahydroprogesterone (allopregnanolone) to dihydroxyprogesterone and 3-alpha-androstanediol to dihydroxyprogesterone. Also plays a role in the biosynthesis of retinoic acid. Can utilize both NADH and NADPH. The sequence is that of Dehydrogenase/reductase SDR family member 9 (Dhrs9) from Mus musculus (Mouse).